A 1395-amino-acid chain; its full sequence is G2/mitotic-specific cyclin-B3 (1395 aa).

A disordered region spans residues 1-59 (MLLPLPPQSSKPVPKKSQSSKIVPSHHDPSEKTGENCQTKISPSSLQESPSSLQGALKK). Residues 10–23 (SKPVPKKSQSSKIV) are compositionally biased toward low complexity. The segment covering 25–34 (SHHDPSEKTG) has biased composition (basic and acidic residues). Low complexity predominate over residues 42–54 (SPSSLQESPSSLQ). Positions 60 to 68 (RSAFEDLTN) match the D-box motif. 2 disordered regions span residues 418 to 464 (LSIK…PTEE) and 1074 to 1122 (ATMT…DSSD). Residues 419 to 431 (SIKEKPSTEKESF) are compositionally biased toward basic and acidic residues. The segment covering 1082 to 1093 (SRTTTESSACES) has biased composition (low complexity).

Belongs to the cyclin family. Cyclin AB subfamily. As to quaternary structure, interacts with CDK2 kinase. Ubiquitinated. Ubiquitination leads to its degradation during anaphase entry, after degradation of CCNB1. Testis specific. In testis, it is expressed in developing germ cells, but not in Leydig cells. Weakly or not expressed in other tissues.

It localises to the nucleus. Functionally, cyclins are positive regulatory subunits of the cyclin-dependent kinases (CDKs), and thereby play an essential role in the control of the cell cycle, notably via their destruction during cell division. Its tissue specificity suggest that it may be required during early meiotic prophase I. In Homo sapiens (Human), this protein is G2/mitotic-specific cyclin-B3 (CCNB3).